Reading from the N-terminus, the 1210-residue chain is Microtubule-associated tumor suppressor 1 homolog (1210 aa).

Disordered stretches follow at residues Met-1–Lys-21, Asp-370–Met-404, Val-446–Val-482, Gln-513–Met-545, and His-585–Glu-618. Basic and acidic residues predominate over residues Asp-370–Asp-379. Phosphoserine occurs at positions 375, 380, and 393. Residues Asp-381–Arg-398 are compositionally biased toward polar residues. The segment covering Val-446–Arg-455 has biased composition (basic and acidic residues). Over residues Lys-473–Val-482 the composition is skewed to polar residues. Over residues Pro-524–Pro-534 the composition is skewed to low complexity. Polar residues predominate over residues His-585–Glu-605. At Ser-621 the chain carries Phosphoserine. Residues Ser-683 to Phe-771 form a disordered region. Over residues Pro-692 to Ser-702 the composition is skewed to polar residues. Positions Ile-876–Leu-1171 form a coiled coil. 9 positions are modified to phosphoserine: Ser-1143, Ser-1164, Ser-1185, Ser-1195, Ser-1199, Ser-1201, Ser-1203, Ser-1204, and Ser-1208. A disordered region spans residues Gly-1177 to Arg-1210. Over residues Ser-1195 to Arg-1210 the composition is skewed to low complexity.

This sequence belongs to the MTUS1 family. Homodimer. Interacts with AGTR2. Interacts with PTPN6. Ubiquitously expressed, with highest levels in uterus and adrenal gland.

It localises to the mitochondrion. The protein resides in the golgi apparatus. Its subcellular location is the cell membrane. The protein localises to the nucleus. Functionally, cooperates with AGTR2 to inhibit ERK2 activation and cell proliferation. May be required for AGTR2 cell surface expression. Together with PTPN6, induces UBE2V2 expression upon angiotensin-II stimulation. The protein is Microtubule-associated tumor suppressor 1 homolog (Mtus1) of Mus musculus (Mouse).